A 345-amino-acid polypeptide reads, in one-letter code: S-adenosylmethionine:tRNA ribosyltransferase-isomerase (345 aa).

Belongs to the QueA family. In terms of assembly, monomer.

It localises to the cytoplasm. The catalysed reaction is 7-aminomethyl-7-carbaguanosine(34) in tRNA + S-adenosyl-L-methionine = epoxyqueuosine(34) in tRNA + adenine + L-methionine + 2 H(+). It functions in the pathway tRNA modification; tRNA-queuosine biosynthesis. Transfers and isomerizes the ribose moiety from AdoMet to the 7-aminomethyl group of 7-deazaguanine (preQ1-tRNA) to give epoxyqueuosine (oQ-tRNA). In Anaeromyxobacter sp. (strain Fw109-5), this protein is S-adenosylmethionine:tRNA ribosyltransferase-isomerase.